The sequence spans 153 residues: Large ribosomal subunit protein uL15 (153 aa).

Positions 21–40 are disordered; the sequence is RGIGSGKGKTGGRGIKGQKS. A compositionally biased stretch (gly residues) spans 23 to 35; the sequence is IGSGKGKTGGRGI.

The protein belongs to the universal ribosomal protein uL15 family. Part of the 50S ribosomal subunit.

In terms of biological role, binds to the 23S rRNA. The protein is Large ribosomal subunit protein uL15 of Rickettsia canadensis (strain McKiel).